A 238-amino-acid polypeptide reads, in one-letter code: Cysteine-rich venom protein (238 aa).

Positions 1 to 19 are cleaved as a signal peptide; sequence MIAFIVLLSLAAVLQQSSG. The propeptide occupies 20–27; it reads TVDFASES. The SCP domain maps to 39-164; that stretch reads KKHNALRRSV…PTKYLYVCQY (126 aa). Intrachain disulfides connect C75-C153, C92-C165, C148-C162, C184-C191, C187-C196, C200-C233, C209-C227, and C218-C231. The ShKT domain occupies 200 to 233; that stretch reads CKREDDYSNCKSLAEKNKCMEEWMKSKCPASCFC.

Belongs to the CRISP family. Expressed by the venom gland.

The protein resides in the secreted. In terms of biological role, blocks olfactory (CNGA2) and retinal (CNGA1) cyclic nucleotide-gated (CNG) ion channel currents. Does not inhibit retinal (CNGA3) currents. It forms high-affinity contacts with the pore turret region and most likely inhibits CNG channel current by blocking the external entrance to the transmembrane pore. Does not affect neither depolarization- nor caffeine-induced contraction arterial smooth muscle. This is Cysteine-rich venom protein from Demansia vestigiata (Lesser black whip snake).